The primary structure comprises 157 residues: Phosphopantetheine adenylyltransferase (157 aa).

A substrate-binding site is contributed by Thr-10. ATP contacts are provided by residues Thr-10–Phe-11 and His-18. Residues Lys-42, Leu-74, and Arg-88 each coordinate substrate. ATP-binding positions include Gly-89–Arg-91, Glu-99, and Asn-124–Ser-130.

The protein belongs to the bacterial CoaD family. As to quaternary structure, homohexamer. Mg(2+) is required as a cofactor.

It localises to the cytoplasm. The enzyme catalyses (R)-4'-phosphopantetheine + ATP + H(+) = 3'-dephospho-CoA + diphosphate. It functions in the pathway cofactor biosynthesis; coenzyme A biosynthesis; CoA from (R)-pantothenate: step 4/5. Functionally, reversibly transfers an adenylyl group from ATP to 4'-phosphopantetheine, yielding dephospho-CoA (dPCoA) and pyrophosphate. The chain is Phosphopantetheine adenylyltransferase from Helicobacter pylori (strain P12).